The primary structure comprises 238 residues: Probable transcriptional regulatory protein M6_Spy0297 (238 aa).

Belongs to the TACO1 family. YeeN subfamily.

It is found in the cytoplasm. In Streptococcus pyogenes serotype M6 (strain ATCC BAA-946 / MGAS10394), this protein is Probable transcriptional regulatory protein M6_Spy0297.